The primary structure comprises 319 residues: Thiamine pyrophosphokinase (319 aa).

Ser2 is modified (N-acetylserine).

Belongs to the thiamine pyrophosphokinase family. In terms of assembly, homodimer.

It catalyses the reaction thiamine + ATP = thiamine diphosphate + AMP + H(+). The protein operates within cofactor biosynthesis; thiamine diphosphate biosynthesis; thiamine diphosphate from thiamine: step 1/1. Functionally, essential protein, it is the only enzyme in yeast capable of synthesizing thiamine pyrophosphate (TPP). The sequence is that of Thiamine pyrophosphokinase from Saccharomyces cerevisiae (strain ATCC 204508 / S288c) (Baker's yeast).